The primary structure comprises 630 residues: tRNA uridine 5-carboxymethylaminomethyl modification enzyme MnmG (630 aa).

Glycine 13–glycine 18 serves as a coordination point for FAD. Glycine 273–phenylalanine 287 is an NAD(+) binding site.

The protein belongs to the MnmG family. Homodimer. Heterotetramer of two MnmE and two MnmG subunits. Requires FAD as cofactor.

Its subcellular location is the cytoplasm. In terms of biological role, NAD-binding protein involved in the addition of a carboxymethylaminomethyl (cmnm) group at the wobble position (U34) of certain tRNAs, forming tRNA-cmnm(5)s(2)U34. The chain is tRNA uridine 5-carboxymethylaminomethyl modification enzyme MnmG from Actinobacillus pleuropneumoniae serotype 5b (strain L20).